The chain runs to 212 residues: Endoplasmic reticulum vesicle protein 25 (212 aa).

The signal sequence occupies residues 1–21; that stretch reads MKSFAACVLLLCALFFEQVFA. The Lumenal portion of the chain corresponds to 22–181; that stretch reads VRFDIPASTK…TNESTNRRVR (160 aa). In terms of domain architecture, GOLD spans 34–122; sequence QVCIRDFVSE…SRSIELDIES (89 aa). The helical transmembrane segment at 182-202 threads the bilayer; it reads NFSIAVIVVLVALGAWQVNYM. The Cytoplasmic segment spans residues 203-212; sequence KNFFRAKHII.

This sequence belongs to the EMP24/GP25L family.

It localises to the endoplasmic reticulum membrane. Its subcellular location is the golgi apparatus membrane. Functionally, constituent of COPII-coated endoplasmic reticulum-derived transport vesicles. Required for efficient transport of a subset of secretory proteins to the Golgi. Facilitates retrograde transport from the Golgi to the endoplasmic reticulum. The protein is Endoplasmic reticulum vesicle protein 25 (ERV25) of Kluyveromyces lactis (strain ATCC 8585 / CBS 2359 / DSM 70799 / NBRC 1267 / NRRL Y-1140 / WM37) (Yeast).